We begin with the raw amino-acid sequence, 225 residues long: Methylthioribulose-1-phosphate dehydratase (225 aa).

Zn(2+)-binding residues include H106 and H108.

It belongs to the aldolase class II family. MtnB subfamily. Requires Zn(2+) as cofactor.

The catalysed reaction is 5-(methylsulfanyl)-D-ribulose 1-phosphate = 5-methylsulfanyl-2,3-dioxopentyl phosphate + H2O. The protein operates within amino-acid biosynthesis; L-methionine biosynthesis via salvage pathway; L-methionine from S-methyl-5-thio-alpha-D-ribose 1-phosphate: step 2/6. In terms of biological role, catalyzes the dehydration of methylthioribulose-1-phosphate (MTRu-1-P) into 2,3-diketo-5-methylthiopentyl-1-phosphate (DK-MTP-1-P). The polypeptide is Methylthioribulose-1-phosphate dehydratase (Xanthomonas oryzae pv. oryzae (strain PXO99A)).